A 248-amino-acid polypeptide reads, in one-letter code: Aquaporin TIP2-3 (248 aa).

The next 2 helical transmembrane spans lie at 20–40 (AYVA…GSAI) and 54–74 (AGLV…VSMA). The NPA 1 signature appears at 83 to 85 (NPA). 3 consecutive transmembrane segments (helical) span residues 97–119 (TILT…CFLL), 141–161 (GVVM…ATAA), and 168–188 (LGTI…LAAG). An NPA 2 motif is present at residues 196 to 198 (NPA). A helical membrane pass occupies residues 217-237 (WVGPLVGGGLAGLVYGDVFIA).

It belongs to the MIP/aquaporin (TC 1.A.8) family. TIP (TC 1.A.8.10) subfamily. Specifically expressed in roots.

The protein resides in the cell membrane. Functionally, water channel required to facilitate the transport of water across cell membrane. The polypeptide is Aquaporin TIP2-3 (TIP2-3) (Zea mays (Maize)).